Reading from the N-terminus, the 113-residue chain is FK506-binding protein 1B (113 aa).

The 95-residue stretch at 19–113 (GQTVVIEYTG…IFDVYLKGLQ (95 aa)) folds into the PPIase FKBP-type domain.

It belongs to the FKBP-type PPIase family. FKBP1 subfamily.

It localises to the cytoplasm. The catalysed reaction is [protein]-peptidylproline (omega=180) = [protein]-peptidylproline (omega=0). With respect to regulation, inhibited by both FK506 and rapamycin. PPIases accelerate the folding of proteins. It catalyzes the cis-trans isomerization of proline imidic peptide bonds in oligopeptides. The polypeptide is FK506-binding protein 1B (fkr-3) (Neurospora crassa (strain ATCC 24698 / 74-OR23-1A / CBS 708.71 / DSM 1257 / FGSC 987)).